Reading from the N-terminus, the 233-residue chain is Large ribosomal subunit protein uL3 (233 aa).

This sequence belongs to the universal ribosomal protein uL3 family. In terms of assembly, part of the 50S ribosomal subunit. Forms a cluster with proteins L14 and L19.

In terms of biological role, one of the primary rRNA binding proteins, it binds directly near the 3'-end of the 23S rRNA, where it nucleates assembly of the 50S subunit. The sequence is that of Large ribosomal subunit protein uL3 from Ureaplasma urealyticum serovar 10 (strain ATCC 33699 / Western).